Reading from the N-terminus, the 191-residue chain is Lipid A acyltransferase PagP (191 aa).

The N-terminal stretch at 1-23 (MRLFYQRISLLISLCGFFSAAWA) is a signal peptide. Active-site residues include H62, D105, and S106.

The protein belongs to the lipid A palmitoyltransferase family. As to quaternary structure, homodimer.

Its subcellular location is the cell outer membrane. It catalyses the reaction a lipid A + a 1,2-diacyl-sn-glycero-3-phosphocholine = a hepta-acyl lipid A + a 2-acyl-sn-glycero-3-phosphocholine. The catalysed reaction is a lipid IVA + a 1,2-diacyl-sn-glycero-3-phosphocholine = a lipid IVB + a 2-acyl-sn-glycero-3-phosphocholine. The enzyme catalyses a lipid IIA + a 1,2-diacyl-sn-glycero-3-phosphocholine = a lipid IIB + a 2-acyl-sn-glycero-3-phosphocholine. In terms of biological role, transfers a fatty acid residue from the sn-1 position of a phospholipid to the N-linked hydroxyfatty acid chain on the proximal unit of lipid A or its precursors. This Sodalis glossinidius (strain morsitans) protein is Lipid A acyltransferase PagP.